Reading from the N-terminus, the 552-residue chain is Lysine--tRNA ligase (552 aa).

Residues 71–79 (PSGLPHLGT) carry the 'HIGH' region motif. The short motif at 319–323 (KISKS) is the 'KMSKS' region element. Lys-322 contributes to the ATP binding site.

It belongs to the class-I aminoacyl-tRNA synthetase family.

It is found in the cytoplasm. It catalyses the reaction tRNA(Lys) + L-lysine + ATP = L-lysyl-tRNA(Lys) + AMP + diphosphate. The polypeptide is Lysine--tRNA ligase (Caulobacter sp. (strain K31)).